The chain runs to 122 residues: Large ribosomal subunit protein uL14c (122 aa).

The protein belongs to the universal ribosomal protein uL14 family. In terms of assembly, part of the 50S ribosomal subunit.

It localises to the plastid. Its subcellular location is the chloroplast. Functionally, binds to 23S rRNA. The protein is Large ribosomal subunit protein uL14c of Chloranthus spicatus (Chulantree).